The sequence spans 439 residues: Acyl transferase 7 (439 aa).

Residues 1–25 (MAAAAPDKAVERLSQKLVHPSSPTP) form a disordered region. Catalysis depends on proton acceptor residues His-176 and Asp-383.

Belongs to the plant acyltransferase family.

Functionally, involved in the incorporation of ferulate into the cell wall. May act as arabinoxylan feruloyl transferase. This chain is Acyl transferase 7, found in Oryza sativa subsp. japonica (Rice).